The primary structure comprises 100 residues: Nucleoid-associated protein Cagg_3200 (100 aa).

Belongs to the YbaB/EbfC family. In terms of assembly, homodimer.

The protein localises to the cytoplasm. It is found in the nucleoid. Its function is as follows. Binds to DNA and alters its conformation. May be involved in regulation of gene expression, nucleoid organization and DNA protection. In Chloroflexus aggregans (strain MD-66 / DSM 9485), this protein is Nucleoid-associated protein Cagg_3200.